A 705-amino-acid polypeptide reads, in one-letter code: SPbeta prophage-derived sublancin-168-processing and transport ATP-binding protein SunT (705 aa).

The region spanning 12 to 138 (QFNSHDCGLA…SKFTNFILEI (127 aa)) is the Peptidase C39 domain. Cys-18 is a catalytic residue. The next 6 membrane-spanning stretches (helical) occupy residues 167-187 (IVFV…AGSF), 205-225 (LITI…FDFV), 281-301 (ANFV…VILY), 306-326 (ILFL…ILFF), 388-408 (VISN…IILW), and 418-438 (SMSL…LSSL). An ABC transmembrane type-1 domain is found at 168–450 (VFVILLTSLF…ILSMQSDLQQ (283 aa)). Residues 483-705 (IKTVNLNIGA…SYSENKEYSI (223 aa)) form the ABC transporter domain. 516–523 (GESGTGKS) provides a ligand contact to ATP.

This sequence belongs to the ABC transporter superfamily. SunT family. Homodimer.

Its subcellular location is the cell membrane. In terms of biological role, sunT (TC 3.A.1.112.4) is required for production of the lantibiotic sublancin-168, probably by both processing the signal peptide and exporting the resulting mature lantibiotic. In Bacillus subtilis (strain 168), this protein is SPbeta prophage-derived sublancin-168-processing and transport ATP-binding protein SunT (sunT).